The sequence spans 1117 residues: Telomerase reverse transcriptase (1117 aa).

Positions 1 to 191 (MQKINNINNN…VKQKKWYKNN (191 aa)) are TEN. The tract at residues 217–519 (NQYIYPEIQR…ENLEKVEEKL (303 aa)) is RBD. One can recognise a Reverse transcriptase domain in the interval 517–881 (EKLIPEDSFQ…NECQWIGKSI (365 aa)). The segment at 520 to 887 (IPEDSFQKYP…GKSIDMNTLE (368 aa)) is RT. A Mg(2+)-binding site is contributed by D618. The TRAP stretch occupies residues 638 to 742 (SDLIQDTYFI…NQDKPRCITK (105 aa)). Mg(2+) is bound by residues D815 and D816. A CTE region spans residues 888 to 1117 (IKSIQKQTQQ…SAKSNQQNTN (230 aa)).

Belongs to the reverse transcriptase family. Telomerase subfamily. As to quaternary structure, component of the telomerase holoenzyme complex, composed of the catalytic core (the catalytic subunit TERT, the telomerase RNA template component TER and TAP65/p65), which is associated with two heterotrimeric subcomplexes: (i) the replication protein A (RPA)-related subcomplex, composed of TEB1, RPA2/TEB2 and RPA3/TEB3 and (ii) the CST-like subcomplex, composed of TAP75/p75, TAP45/p45 and TAP19/p19. TEB1 and the CST-like subcomplex are tethered to the catalytic core by TAP50/p50.

The protein resides in the nucleus. It localises to the chromosome. The protein localises to the telomere. The enzyme catalyses DNA(n) + a 2'-deoxyribonucleoside 5'-triphosphate = DNA(n+1) + diphosphate. In terms of biological role, catalytic component of telomerase, an essential ribonucleoprotein enzyme that copies new telomeric repeats onto chromosome ends by repetitively synthesizing the short telomere-repeat sequence 5'-TTGGGG-3' using an RNA template component TER. TERT is a reverse transcriptase that adds simple sequence repeats to chromosome ends by copying a template sequence within the RNA component of the enzyme. This chain is Telomerase reverse transcriptase, found in Tetrahymena thermophila (strain SB210).